The sequence spans 471 residues: GTPase Der (471 aa).

EngA-type G domains are found at residues 3-166 (PTLA…EPEA) and 177-350 (IKLA…SSAT). Residues 9 to 16 (GRPNVGKS), 56 to 60 (DTGGI), 118 to 121 (NKVD), 183 to 190 (GRPNVGKS), 230 to 234 (DTAGV), and 295 to 298 (NKWD) contribute to the GTP site. The 85-residue stretch at 351–435 (EKLNTNFLTK…PIRFEFKSSE (85 aa)) folds into the KH-like domain. The segment at 432-471 (KSSENPFAGRKNAMSKKPEHPSRRANSGGKSINRRPRPKS) is disordered.

The protein belongs to the TRAFAC class TrmE-Era-EngA-EngB-Septin-like GTPase superfamily. EngA (Der) GTPase family. In terms of assembly, associates with the 50S ribosomal subunit.

Its function is as follows. GTPase that plays an essential role in the late steps of ribosome biogenesis. The sequence is that of GTPase Der from Saccharophagus degradans (strain 2-40 / ATCC 43961 / DSM 17024).